The sequence spans 69 residues: Large ribosomal subunit protein bL31 (69 aa).

Zn(2+) contacts are provided by Cys-17, Cys-19, Cys-37, and Cys-40.

It belongs to the bacterial ribosomal protein bL31 family. Type A subfamily. As to quaternary structure, part of the 50S ribosomal subunit. Requires Zn(2+) as cofactor.

Binds the 23S rRNA. The sequence is that of Large ribosomal subunit protein bL31 from Caldicellulosiruptor bescii (strain ATCC BAA-1888 / DSM 6725 / KCTC 15123 / Z-1320) (Anaerocellum thermophilum).